The primary structure comprises 243 residues: MKFHSKLQEGIFLKRYKRFFADIEFQGQQVTAHVPNTGSLKSVNNPGQHCLFSESTNPERKLKYTLEMIKSPTGSWVGVNTATPNTVVRETLHHVVGHKKEVIGGFAHWAAFDEVKPEYKISAETRLDFALKKNNSDKMHFIEVKNVTLAEEGTAKFPDAVTERGQKHLRELMALMEQGHTAEIVFTIQRHDCGSFSPADDIDPEYGRLLREAYQKGLRVSPFVLDLTPESVELSETVLPLKM.

Belongs to the SfsA family.

This is Sugar fermentation stimulation protein homolog from Bdellovibrio bacteriovorus (strain ATCC 15356 / DSM 50701 / NCIMB 9529 / HD100).